Here is a 378-residue protein sequence, read N- to C-terminus: Erythronate-4-phosphate dehydrogenase (378 aa).

The substrate site is built by S45 and T67. D147 is an NAD(+) binding site. The active site involves R209. D233 serves as a coordination point for NAD(+). E238 is a catalytic residue. The active-site Proton donor is H255. G258 contacts NAD(+). Residue Y259 coordinates substrate.

The protein belongs to the D-isomer specific 2-hydroxyacid dehydrogenase family. PdxB subfamily. As to quaternary structure, homodimer.

Its subcellular location is the cytoplasm. It carries out the reaction 4-phospho-D-erythronate + NAD(+) = (R)-3-hydroxy-2-oxo-4-phosphooxybutanoate + NADH + H(+). It participates in cofactor biosynthesis; pyridoxine 5'-phosphate biosynthesis; pyridoxine 5'-phosphate from D-erythrose 4-phosphate: step 2/5. Catalyzes the oxidation of erythronate-4-phosphate to 3-hydroxy-2-oxo-4-phosphonooxybutanoate. This is Erythronate-4-phosphate dehydrogenase from Shewanella denitrificans (strain OS217 / ATCC BAA-1090 / DSM 15013).